Here is a 217-residue protein sequence, read N- to C-terminus: Proteasome subunit beta type-9 (217 aa).

The propeptide at 1–18 (MLGEEAEPQWISEEVKTG) is removed in mature form. Thr-19 (nucleophile) is an active-site residue.

Belongs to the peptidase T1B family. As to quaternary structure, the 26S proteasome consists of a 20S proteasome core and two 19S regulatory subunits. The 20S proteasome core is composed of 28 subunits that are arranged in four stacked rings, resulting in a barrel-shaped structure. The two end rings are each formed by seven alpha subunits, and the two central rings are each formed by seven beta subunits. The catalytic chamber with the active sites is on the inside of the barrel. Component of the immunoproteasome, where it displaces the equivalent housekeeping subunit PSMB6. In terms of processing, autocleaved. The resulting N-terminal Thr residue of the mature subunit is responsible for the nucleophile proteolytic activity.

Its subcellular location is the cytoplasm. It is found in the nucleus. It carries out the reaction Cleavage of peptide bonds with very broad specificity.. Functionally, the proteasome is a multicatalytic proteinase complex which is characterized by its ability to cleave peptides with Arg, Phe, Tyr, Leu, and Glu adjacent to the leaving group at neutral or slightly basic pH. The proteasome has an ATP-dependent proteolytic activity. This subunit is involved in antigen processing to generate class I binding peptides. The protein is Proteasome subunit beta type-9 (psmb9) of Oryzias latipes (Japanese rice fish).